The primary structure comprises 218 residues: Octanoyltransferase (218 aa).

Residues 45 to 218 (AGTADELWLL…TDALQRAIYS (174 aa)) enclose the BPL/LPL catalytic domain. Substrate is bound by residues 84-91 (RGGQITYH), 151-153 (ALG), and 164-166 (GLA). Cys-182 functions as the Acyl-thioester intermediate in the catalytic mechanism.

The protein belongs to the LipB family.

The protein resides in the cytoplasm. The catalysed reaction is octanoyl-[ACP] + L-lysyl-[protein] = N(6)-octanoyl-L-lysyl-[protein] + holo-[ACP] + H(+). Its pathway is protein modification; protein lipoylation via endogenous pathway; protein N(6)-(lipoyl)lysine from octanoyl-[acyl-carrier-protein]: step 1/2. In terms of biological role, catalyzes the transfer of endogenously produced octanoic acid from octanoyl-acyl-carrier-protein onto the lipoyl domains of lipoate-dependent enzymes. Lipoyl-ACP can also act as a substrate although octanoyl-ACP is likely to be the physiological substrate. In Thiobacillus denitrificans (strain ATCC 25259 / T1), this protein is Octanoyltransferase.